The primary structure comprises 230 residues: Acyl-protein thioesterase 1 (230 aa).

Residues Ser119, Asp174, and His208 each act as charge relay system in the active site. Lys224 bears the N6-acetyllysine mark.

The protein belongs to the AB hydrolase superfamily. AB hydrolase 2 family. As to quaternary structure, homodimer.

The protein resides in the cytoplasm. It is found in the cell membrane. The protein localises to the nucleus membrane. It localises to the endoplasmic reticulum. The enzyme catalyses S-hexadecanoyl-L-cysteinyl-[protein] + H2O = L-cysteinyl-[protein] + hexadecanoate + H(+). It carries out the reaction 1-hexadecanoyl-sn-glycero-3-phosphocholine + H2O = sn-glycerol 3-phosphocholine + hexadecanoate + H(+). It catalyses the reaction a 1-(9Z-octadecenoyl)-2-acyl-sn-glycero-3-phosphocholine + H2O = a 2-acyl-sn-glycero-3-phosphocholine + (9Z)-octadecenoate + H(+). Its function is as follows. Acts as an acyl-protein thioesterase. Hydrolyzes fatty acids from S-acylated cysteine residues in proteins such as trimeric G alpha proteins or HRAS. Acts as a palmitoyl thioesterase that catalyzes depalmitoylation of proteins, such as ADRB2, KCNMA1 and SQSTM1. Acts as a negative regulator of autophagy by mediating palmitoylation of SQSTM1, decreasing affinity between SQSTM1 and ATG8 proteins and recruitment of ubiquitinated cargo proteins to autophagosomes. Acts as a lysophospholipase and hydrolyzes lysophosphatidylcholine (lyso-PC). Also hydrolyzes lysophosphatidylethanolamine (lyso-PE), lysophosphatidylinositol (lyso-PI) and lysophosphatidylserine (lyso-PS). Has much higher thioesterase activity than lysophospholipase activity. Contributes to the production of lysophosphatidic acid (LPA) during blood coagulation by recognizing and cleaving plasma phospholipids to generate lysophospholipids which in turn act as substrates for ENPP2 to produce LPA. The sequence is that of Acyl-protein thioesterase 1 (Lypla1) from Mus musculus (Mouse).